The following is a 110-amino-acid chain: Probable ribonuclease HepT (110 aa).

Active-site residues include Arg-75 and His-80. The RX(4)HXY motif motif lies at 75 to 82 (RDKLIHAY). Tyr-82 is modified (O-di-AMP-tyrosine).

It belongs to the HepT RNase toxin family. In terms of processing, modified by cognate antitoxin MntA; probably at least 2 successive AMPylation events occur on Tyr-82.

Its function is as follows. Toxic component of a type VII toxin-antitoxin (TA) system. Overexpression in E.coli inhibits cell growth. Neutralized by cognate antitoxin MntA. Neutralization is probably due to AMPylation by MntA. Probably an RNAase. The sequence is that of Probable ribonuclease HepT from Thermococcus cleftensis (strain DSM 27260 / KACC 17922 / CL1).